The following is a 197-amino-acid chain: Viral polyamine acetyltransferase (197 aa).

Residue asparagine 22 participates in acetyl-CoA binding. The active site involves glutamate 27. The N-acetyltransferase domain occupies 102-182; sequence SYTPDDKCLY…YQYGITKPFD (81 aa). Isoleucine 115, serine 117, glycine 121, glycine 123, alanine 125, threonine 126, threonine 149, asparagine 150, and lysine 159 together coordinate acetyl-CoA.

Belongs to the acetyltransferase family.

It catalyses the reaction spermine + acetyl-CoA = N(1)-acetylspermine + CoA + H(+). The catalysed reaction is spermidine + acetyl-CoA = N(1)-acetylspermidine + CoA + H(+). The enzyme catalyses spermidine + acetyl-CoA = N(8)-acetylspermidine + CoA + H(+). It carries out the reaction putrescine + acetyl-CoA = N-acetylputrescine + CoA + H(+). It catalyses the reaction cadaverine + acetyl-CoA = N-acetylcadaverine + CoA + H(+). The catalysed reaction is sym-homospermidine + acetyl-CoA = N(1)-acetyl-sym-homospermidine + CoA + H(+). Its function is as follows. Acetylates polyamines such as spermine, spermidine, cadaverine, homospermidine and putrescine (the latter with low efficiency). May play a role in the regulation of polyamine catabolism in the host during viral replication. This Chlorella (PBCV-1) protein is Viral polyamine acetyltransferase.